The following is a 190-amino-acid chain: RING finger protein 227 (190 aa).

The RING-type zinc finger occupies 18-81; that stretch reads CNICFRPYNL…RRAVTCPFCR (64 aa). The segment at 108–147 is disordered; it reads ARAEREGDPMGSPAKDSGEDGEDDDGEAESEKGAGPPSAG. Over residues 126–135 the composition is skewed to acidic residues; it reads EDGEDDDGEA.

This chain is RING finger protein 227, found in Mus musculus (Mouse).